The sequence spans 428 residues: MGKILIKDCTIVPISGPVIGKGVIAINDDRLHYVGPAGGLPAGWQADTVIDAGDMVALPGLVNAHTHAAMTLLRSYADDLPLKQWLEEKIWPREDRLEREDIYWGSKIALLEMIRSGTTTFADMYFHMDAVAGAVVEAGLRASLCQGLIGLQDTSNKRLEAGISMVKEWHGAGEGRITTMLGPHAPNTCTPEYLTRVAETAAGLGVGLHIHLAETRGEVEDVKARYGATPVALVNKLGLLDLPVLAAHCVHLTTEEIAILAEKKVGVAHCPESNLKLASGVAPVKEMLAAGVNVAIGTDGASSNNNLDMVAETRTAALLAKGITGDPTVVPAHQALVMATLNGARALGLEKEIGTLEAGKKADLILVDMRQPHLMPPNDVEANLVYAARGSDVDTVIVNGKILMARGEVKTLDAEEIYAQVTKRMHKG.

Residues H65 and H67 each coordinate Zn(2+). The substrate site is built by E94, R158, and H184. Residue H211 coordinates Zn(2+). Positions 214 and 299 each coordinate substrate. Residue D299 participates in Zn(2+) binding.

It belongs to the metallo-dependent hydrolases superfamily. MTA/SAH deaminase family. It depends on Zn(2+) as a cofactor.

It carries out the reaction S-adenosyl-L-homocysteine + H2O + H(+) = S-inosyl-L-homocysteine + NH4(+). It catalyses the reaction S-methyl-5'-thioadenosine + H2O + H(+) = S-methyl-5'-thioinosine + NH4(+). Functionally, catalyzes the deamination of 5-methylthioadenosine and S-adenosyl-L-homocysteine into 5-methylthioinosine and S-inosyl-L-homocysteine, respectively. Is also able to deaminate adenosine. This Moorella thermoacetica (strain ATCC 39073 / JCM 9320) protein is 5-methylthioadenosine/S-adenosylhomocysteine deaminase.